A 309-amino-acid chain; its full sequence is Taste receptor type 2 member 113 (309 aa).

Residues 1-8 (MVAVLQST) are Extracellular-facing. The helical transmembrane segment at 9-29 (FAIIFSMEFIVGTLGNGFIIL) threads the bilayer. Over 30 to 55 (MTCIDWVRRRKISLVDQILTALAITR) the chain is Cytoplasmic. The chain crosses the membrane as a helical span at residues 56-76 (ITLILLVFIDWWVSVLFPALH). Residues 77-101 (ETGKILRMYFISWTVINHCNLWLTA) lie on the Extracellular side of the membrane. A helical membrane pass occupies residues 102–122 (SLSIIYFLKIASFSSIIFLYL). Topologically, residues 123-127 (KFRVK) are cytoplasmic. The helical transmembrane segment at 128 to 148 (NVVFVTLLVSLFFLFINTAIV) threads the bilayer. Topologically, residues 149–185 (NVYFDVCFDGVQRNVSQVSRLYNHEQICKFLSFTNPM) are extracellular. An N-linked (GlcNAc...) asparagine glycan is attached at asparagine 162. A helical membrane pass occupies residues 186 to 206 (FAFIPFVTSMATFFLLIFSLW). At 207–229 (RHLKNMKHNAEGCRDVSTIVHIR) the chain is on the cytoplasmic side. The helical transmembrane segment at 230–250 (ALQTIIVSVVLYSTFFLSFFV) threads the bilayer. Residues 251-262 (KVWSSGSPERYL) are Extracellular-facing. A helical transmembrane segment spans residues 263–283 (IFLFVWALGNAVLPAHTFVLI). Topologically, residues 284-309 (WGNCRLRWASLSLMLWLRYRFKNIDV) are cytoplasmic.

Belongs to the G-protein coupled receptor T2R family.

The protein localises to the membrane. Functionally, putative taste receptor which may play a role in the perception of bitterness. In Rattus norvegicus (Rat), this protein is Taste receptor type 2 member 113.